A 545-amino-acid chain; its full sequence is Monocarboxylate transporter 8 (545 aa).

Residues 1–98 are disordered; it reads MALPSPASEE…VETRGTARGF (98 aa). Alanine 2 is modified (N-acetylalanine). The Cytoplasmic segment spans residues 2–102; that stretch reads ALPSPASEEA…GTARGFQPPE (101 aa). Tandem repeats lie at residues 29–50 and 51–72. The interval 29–72 is 2 X 22 AA approximate tandem repeats; that stretch reads PVPEPEPEPEPEPEPDPEPVPVPPPEPQPEPEPQPLPDPAPLPE. Over residues 33-45 the composition is skewed to acidic residues; it reads PEPEPEPEPEPDP. Over residues 46–70 the composition is skewed to pro residues; the sequence is EPVPVPPPEPQPEPEPQPLPDPAPL. The helical transmembrane segment at 103-123 threads the bilayer; it reads GGFGWIVVFAATWCNGSIFGI. Residues 124–149 are Extracellular-facing; sequence HNSVGILYSMLLEEEKEKNRQVEFQA. Residues 150-170 traverse the membrane as a helical segment; the sequence is AWVGALAMGMIFFCSPIVSIF. The Cytoplasmic portion of the chain corresponds to 171–177; the sequence is TDRLGCR. Residues 178–198 form a helical membrane-spanning segment; the sequence is ITATTGAAVAFIGLHTSSFTS. Topologically, residues 199–206 are extracellular; the sequence is SLSLRYFT. The chain crosses the membrane as a helical span at residues 207–227; sequence YGILFGCGCSFAFQPSLVILG. Topologically, residues 228-235 are cytoplasmic; that stretch reads HYFQRRLG. The chain crosses the membrane as a helical span at residues 236–256; it reads LANGVVSAGSSIFSMSFPFLI. At 257–264 the chain is on the extracellular side; sequence KMLGDKIK. Residues 265–285 traverse the membrane as a helical segment; it reads LAQTFQVLSTFMFVLTLLSLT. Topologically, residues 286–328 are cytoplasmic; that stretch reads YRPLLPSSQDTPSKRGAHTLRQRFLVQFRKYFNMRVFRQRTYR. A helical transmembrane segment spans residues 329 to 349; that stretch reads IWAFGIAAAALGYFVPYVHLM. Topologically, residues 350-362 are extracellular; the sequence is KYVEDKFKEIKET. A helical membrane pass occupies residues 363–383; the sequence is WVLLVCIGATSGLGRLVSGHI. Residues 384 to 392 are Cytoplasmic-facing; the sequence is SDSIPGLKK. A helical membrane pass occupies residues 393 to 413; it reads IYLQVLSFLLLGLMSMMIPLC. Residues 414-415 are Extracellular-facing; that stretch reads RD. A helical transmembrane segment spans residues 416 to 436; it reads FGGLIVVCLFLGLCDGFFITI. Over 437–453 the chain is Cytoplasmic; it reads MAPIAFELVGPMQASQA. Residues 454-474 traverse the membrane as a helical segment; the sequence is IGYLLGMMALPMIAGPPIAGL. The Extracellular segment spans residues 475 to 483; it reads LRNCFGDYH. Residues 484-504 form a helical membrane-spanning segment; that stretch reads VAFYFAGVPPIIGAVILFFVP. At 505-545 the chain is on the cytoplasmic side; sequence LMHQRMFKKEQRDSSKDKMLSHDPDPNGELLPGSPTPEEPI. Over residues 514-529 the composition is skewed to basic and acidic residues; sequence EQRDSSKDKMLSHDPD. Residues 514-545 form a disordered region; the sequence is EQRDSSKDKMLSHDPDPNGELLPGSPTPEEPI. Threonine 540 is modified (phosphothreonine).

Belongs to the major facilitator superfamily. Monocarboxylate porter (TC 2.A.1.13) family. In terms of assembly, monomer. Homodimer. Homooligomer. As to expression, expressed in cerebral microvessels.

It localises to the cell membrane. The protein localises to the apical cell membrane. It catalyses the reaction 3,3',5-triiodo-L-thyronine(out) = 3,3',5-triiodo-L-thyronine(in). It carries out the reaction 3,3',5'-triiodo-L-thyronine(out) = 3,3',5'-triiodo-L-thyronine(in). The catalysed reaction is L-thyroxine(out) = L-thyroxine(in). The enzyme catalyses 3,3'-diiodo-L-thyronine(out) = 3,3'-diiodo-L-thyronine(in). Functionally, specific thyroid hormone transmembrane transporter, that mediates both uptake and efflux of thyroid hormones across the cell membrane independently of pH or a Na(+) gradient. Major substrates are the iodothyronines T3 and T4 and to a lesser extent rT3 and 3,3-diiodothyronine (3,3'-T2). Acts as an important mediator of thyroid hormone transport, especially T3, through the blood-brain barrier. This chain is Monocarboxylate transporter 8 (Slc16a2), found in Mus musculus (Mouse).